Consider the following 240-residue polypeptide: Lipoprotein-releasing system ATP-binding protein LolD (240 aa).

Positions Ile15 to Val240 constitute an ABC transporter domain. Gly51 to Ser58 is an ATP binding site.

This sequence belongs to the ABC transporter superfamily. Lipoprotein translocase (TC 3.A.1.125) family. As to quaternary structure, the complex is composed of two ATP-binding proteins (LolD) and two transmembrane proteins (LolC and LolE).

It localises to the cell inner membrane. In terms of biological role, part of the ABC transporter complex LolCDE involved in the translocation of mature outer membrane-directed lipoproteins, from the inner membrane to the periplasmic chaperone, LolA. Responsible for the formation of the LolA-lipoprotein complex in an ATP-dependent manner. The protein is Lipoprotein-releasing system ATP-binding protein LolD of Xylella fastidiosa (strain 9a5c).